Reading from the N-terminus, the 294-residue chain is tRNA dimethylallyltransferase (294 aa).

9–16 lines the ATP pocket; that stretch reads GPTASGKS. 11 to 16 contacts substrate; the sequence is TASGKS. An interaction with substrate tRNA region spans residues 155–159; that stretch reads QRVIR.

It belongs to the IPP transferase family. Monomer. It depends on Mg(2+) as a cofactor.

It catalyses the reaction adenosine(37) in tRNA + dimethylallyl diphosphate = N(6)-dimethylallyladenosine(37) in tRNA + diphosphate. In terms of biological role, catalyzes the transfer of a dimethylallyl group onto the adenine at position 37 in tRNAs that read codons beginning with uridine, leading to the formation of N6-(dimethylallyl)adenosine (i(6)A). This is tRNA dimethylallyltransferase from Leuconostoc citreum (strain KM20).